The chain runs to 209 residues: Small ribosomal subunit protein uS4 (209 aa).

The region spanning 98–161 (ARLDNVVYRM…RDLEVIKKAV (64 aa)) is the S4 RNA-binding domain.

Belongs to the universal ribosomal protein uS4 family. As to quaternary structure, part of the 30S ribosomal subunit. Contacts protein S5. The interaction surface between S4 and S5 is involved in control of translational fidelity.

Its function is as follows. One of the primary rRNA binding proteins, it binds directly to 16S rRNA where it nucleates assembly of the body of the 30S subunit. Functionally, with S5 and S12 plays an important role in translational accuracy. The polypeptide is Small ribosomal subunit protein uS4 (Thermotoga petrophila (strain ATCC BAA-488 / DSM 13995 / JCM 10881 / RKU-1)).